The primary structure comprises 393 residues: Proteasome-activating nucleotidase (393 aa).

The stretch at 14–53 (SDEVQLVRLLEEKIKSLQIEIENLRKELNYYKAEMEKMLS) forms a coiled coil. ATP-binding positions include 178–183 (GTGKTM) and Tyr317. The interval 391–393 (KYS) is docks into pockets in the proteasome alpha-ring to cause gate opening.

Belongs to the AAA ATPase family. Homohexamer. The hexameric complex has a two-ring architecture resembling a top hat that caps the 20S proteasome core at one or both ends. Upon ATP-binding, the C-terminus of PAN interacts with the alpha-rings of the proteasome core by binding to the intersubunit pockets.

The protein localises to the cytoplasm. In terms of biological role, ATPase which is responsible for recognizing, binding, unfolding and translocation of substrate proteins into the archaeal 20S proteasome core particle. Is essential for opening the gate of the 20S proteasome via an interaction with its C-terminus, thereby allowing substrate entry and access to the site of proteolysis. Thus, the C-termini of the proteasomal ATPase function like a 'key in a lock' to induce gate opening and therefore regulate proteolysis. Unfolding activity requires energy from ATP hydrolysis, whereas ATP binding alone promotes ATPase-20S proteasome association which triggers gate opening, and supports translocation of unfolded substrates. The sequence is that of Proteasome-activating nucleotidase from Saccharolobus islandicus (strain M.16.27) (Sulfolobus islandicus).